The primary structure comprises 515 residues: Bifunctional purine biosynthesis protein PurH (515 aa).

An MGS-like domain is found at methionine 1–valine 145.

It belongs to the PurH family.

The enzyme catalyses (6R)-10-formyltetrahydrofolate + 5-amino-1-(5-phospho-beta-D-ribosyl)imidazole-4-carboxamide = 5-formamido-1-(5-phospho-D-ribosyl)imidazole-4-carboxamide + (6S)-5,6,7,8-tetrahydrofolate. The catalysed reaction is IMP + H2O = 5-formamido-1-(5-phospho-D-ribosyl)imidazole-4-carboxamide. Its pathway is purine metabolism; IMP biosynthesis via de novo pathway; 5-formamido-1-(5-phospho-D-ribosyl)imidazole-4-carboxamide from 5-amino-1-(5-phospho-D-ribosyl)imidazole-4-carboxamide (10-formyl THF route): step 1/1. It functions in the pathway purine metabolism; IMP biosynthesis via de novo pathway; IMP from 5-formamido-1-(5-phospho-D-ribosyl)imidazole-4-carboxamide: step 1/1. This Streptococcus pneumoniae serotype 2 (strain D39 / NCTC 7466) protein is Bifunctional purine biosynthesis protein PurH.